The following is a 106-amino-acid chain: Thioredoxin-2 (106 aa).

The region spanning 2-106 (VYQIKDKADL…RLEDVIKANI (105 aa)) is the Thioredoxin domain. Residues Cys-32 and Cys-35 each act as nucleophile in the active site. A disulfide bridge links Cys-32 with Cys-35.

This sequence belongs to the thioredoxin family.

Participates in various redox reactions through the reversible oxidation of its active center dithiol to a disulfide and catalyzes dithiol-disulfide exchange reactions. As a reducing substrate of peroxiredoxin 1, thioredoxin 2 is preferred over thioredoxin 1. The protein is Thioredoxin-2 of Drosophila yakuba (Fruit fly).